An 89-amino-acid polypeptide reads, in one-letter code: Large ribosomal subunit protein bL27 (89 aa).

Positions 1–22 (MAHKKAGGSSRNGRDSESKRLG) are disordered.

This sequence belongs to the bacterial ribosomal protein bL27 family.

The sequence is that of Large ribosomal subunit protein bL27 from Brucella abortus (strain S19).